Reading from the N-terminus, the 538-residue chain is Bifunctional purine biosynthesis protein PurH (538 aa).

Residues Ile8–Thr158 enclose the MGS-like domain.

The protein belongs to the PurH family.

It carries out the reaction (6R)-10-formyltetrahydrofolate + 5-amino-1-(5-phospho-beta-D-ribosyl)imidazole-4-carboxamide = 5-formamido-1-(5-phospho-D-ribosyl)imidazole-4-carboxamide + (6S)-5,6,7,8-tetrahydrofolate. The enzyme catalyses IMP + H2O = 5-formamido-1-(5-phospho-D-ribosyl)imidazole-4-carboxamide. The protein operates within purine metabolism; IMP biosynthesis via de novo pathway; 5-formamido-1-(5-phospho-D-ribosyl)imidazole-4-carboxamide from 5-amino-1-(5-phospho-D-ribosyl)imidazole-4-carboxamide (10-formyl THF route): step 1/1. Its pathway is purine metabolism; IMP biosynthesis via de novo pathway; IMP from 5-formamido-1-(5-phospho-D-ribosyl)imidazole-4-carboxamide: step 1/1. The protein is Bifunctional purine biosynthesis protein PurH of Mesorhizobium japonicum (strain LMG 29417 / CECT 9101 / MAFF 303099) (Mesorhizobium loti (strain MAFF 303099)).